The primary structure comprises 178 residues: Adenine phosphoribosyltransferase (178 aa).

It belongs to the purine/pyrimidine phosphoribosyltransferase family. In terms of assembly, homodimer.

It is found in the cytoplasm. It catalyses the reaction AMP + diphosphate = 5-phospho-alpha-D-ribose 1-diphosphate + adenine. The protein operates within purine metabolism; AMP biosynthesis via salvage pathway; AMP from adenine: step 1/1. In terms of biological role, catalyzes a salvage reaction resulting in the formation of AMP, that is energically less costly than de novo synthesis. The sequence is that of Adenine phosphoribosyltransferase from Cereibacter sphaeroides (strain ATCC 17023 / DSM 158 / JCM 6121 / CCUG 31486 / LMG 2827 / NBRC 12203 / NCIMB 8253 / ATH 2.4.1.) (Rhodobacter sphaeroides).